We begin with the raw amino-acid sequence, 295 residues long: Ethanolamine ammonia-lyase small subunit (295 aa).

Positions 208 and 229 each coordinate adenosylcob(III)alamin.

The protein belongs to the EutC family. The basic unit is a heterodimer which dimerizes to form tetramers. The heterotetramers trimerize; 6 large subunits form a core ring with 6 small subunits projecting outwards. It depends on adenosylcob(III)alamin as a cofactor.

Its subcellular location is the bacterial microcompartment. The catalysed reaction is ethanolamine = acetaldehyde + NH4(+). It functions in the pathway amine and polyamine degradation; ethanolamine degradation. Catalyzes the deamination of various vicinal amino-alcohols to oxo compounds. Allows this organism to utilize ethanolamine as the sole source of nitrogen and carbon in the presence of external vitamin B12. This is Ethanolamine ammonia-lyase small subunit from Fusobacterium nucleatum subsp. nucleatum (strain ATCC 25586 / DSM 15643 / BCRC 10681 / CIP 101130 / JCM 8532 / KCTC 2640 / LMG 13131 / VPI 4355).